We begin with the raw amino-acid sequence, 259 residues long: Dickkopf-related protein 2 (259 aa).

The signal sequence occupies residues 1–33 (MAALMRVKDSSRCLLLLAAVLMVESSQLGSSRA). Residues 42–70 (LGGETPAQSANRSAGMNQGLAFGGSKKGK) are disordered. Polar residues predominate over residues 47–57 (PAQSANRSAGM). N-linked (GlcNAc...) asparagine glycosylation is present at asparagine 52. The segment at 78–127 (CSSDKECEVGRYCHSPHQGSSACMLCRRKKKRCHRDGMCCPGTRCNNGIC) is DKK-type Cys-1. 5 disulfides stabilise this stretch: cysteine 183-cysteine 195, cysteine 189-cysteine 204, cysteine 194-cysteine 231, cysteine 214-cysteine 239, and cysteine 233-cysteine 256. A DKK-type Cys-2 region spans residues 183–256 (CLRSSDCIDG…YSSKARLHVC (74 aa)).

Belongs to the dickkopf family. As to quaternary structure, interacts with LRP5 and LRP6. Post-translationally, may be proteolytically processed by a furin-like protease.

It is found in the secreted. Antagonizes canonical Wnt signaling by inhibiting LRP5/6 interaction with Wnt and by forming a ternary complex with the transmembrane protein KREMEN that promotes internalization of LRP5/6. DKKs play an important role in vertebrate development, where they locally inhibit Wnt regulated processes such as antero-posterior axial patterning, limb development, somitogenesis and eye formation. In the adult, Dkks are implicated in bone formation and bone disease, cancer and Alzheimer disease. The sequence is that of Dickkopf-related protein 2 from Mus musculus (Mouse).